A 279-amino-acid polypeptide reads, in one-letter code: Movement protein (279 aa).

The protein belongs to the cucumovirus movement protein family.

The protein resides in the host cell junction. It localises to the host plasmodesma. Transports viral genome to neighboring plant cells directly through plasmosdesmata, without any budding. The movement protein allows efficient cell to cell propagation, by bypassing the host cell wall barrier. Acts by forming a tubular structure at the host plasmodesmata, enlarging it enough to allow free passage of virion capsids. The protein is Movement protein of Cucumis sativus (Cucumber).